We begin with the raw amino-acid sequence, 636 residues long: PTS system beta-glucoside-specific EIIBCA component (636 aa).

Residues 1 to 86 (MKYEQLAKDI…VEIGGFQNQA (86 aa)) form the PTS EIIB type-1 domain. The Phosphocysteine intermediate; for EIIB activity role is filled by Cys26. The next 10 membrane-spanning stretches (helical) occupy residues 104 to 124 (IDII…TGMI), 146 to 166 (LLHA…GYTA), 172 to 192 (ATPF…LVVL), 215 to 235 (FLGI…IILA), 258 to 278 (LVPF…IGPI), 299 to 319 (IIAG…GLHW), 337 to 357 (VLAM…AVWL), 369 to 389 (VPAF…GVTL), 407 to 427 (AIIG…IFGI), and 444 to 464 (IVIA…LFGL). Positions 105-476 (DIIASIFTPV…GNASDEQTET (372 aa)) constitute a PTS EIIC type-1 domain. The tract at residues 472 to 492 (EQTETKAHTSTGTGEKEEISS) is disordered. A PTS EIIA type-1 domain is found at 506 to 610 (DEAFSSGALG…AVTTPVIVTN (105 aa)). The active-site Tele-phosphohistidine intermediate; for EIIA activity is His558.

Its subcellular location is the cell membrane. Functionally, the phosphoenolpyruvate-dependent sugar phosphotransferase system (sugar PTS), a major carbohydrate active -transport system, catalyzes the phosphorylation of incoming sugar substrates concomitantly with their translocation across the cell membrane. This system is involved in beta-glucoside transport. The sequence is that of PTS system beta-glucoside-specific EIIBCA component (bglP) from Halalkalibacterium halodurans (strain ATCC BAA-125 / DSM 18197 / FERM 7344 / JCM 9153 / C-125) (Bacillus halodurans).